The sequence spans 146 residues: Hemoglobin subunit beta (146 aa).

An N-acetylalanine modification is found at Ala-1. The 145-residue stretch at 2-146 folds into the Globin domain; the sequence is SFDPHEKQLI…VAAALAAEYH (145 aa). Heme b-binding residues include His-63 and His-92.

Belongs to the globin family. Heterotetramer of two alpha chains and two beta chains. Red blood cells.

In terms of biological role, involved in oxygen transport from the lung to the various peripheral tissues. This chain is Hemoglobin subunit beta (HBB), found in Crocodylus niloticus (Nile crocodile).